A 154-amino-acid polypeptide reads, in one-letter code: Nascent polypeptide-associated complex subunit beta (154 aa).

The 66-residue stretch at 34–99 folds into the NAC-A/B domain; that stretch reads EQDDTKLIEA…PQEKDVTQLI (66 aa). The tract at residues 125 to 154 is disordered; sequence KNPELNAGGAEGAEEDIPDLIEGQKFDDVE.

This sequence belongs to the NAC-beta family. Part of the nascent polypeptide-associated complex (NAC), consisting of EGD2 and EGD1. NAC associates with ribosomes via EGD1.

The protein localises to the cytoplasm. Its subcellular location is the nucleus. Its function is as follows. Component of the nascent polypeptide-associated complex (NAC), a dynamic component of the ribosomal exit tunnel, protecting the emerging polypeptides from interaction with other cytoplasmic proteins to ensure appropriate nascent protein targeting. The NAC complex also promotes mitochondrial protein import by enhancing productive ribosome interactions with the outer mitochondrial membrane and blocks the inappropriate interaction of ribosomes translating non-secretory nascent polypeptides with translocation sites in the membrane of the endoplasmic reticulum. EGD1 may act as a transcription factor that exert a negative effect on the expression of several genes that are transcribed by RNA polymerase II. The sequence is that of Nascent polypeptide-associated complex subunit beta (EGD1) from Debaryomyces hansenii (strain ATCC 36239 / CBS 767 / BCRC 21394 / JCM 1990 / NBRC 0083 / IGC 2968) (Yeast).